Reading from the N-terminus, the 284-residue chain is RNase adapter protein RapZ (284 aa).

ATP is bound at residue 8–15; that stretch reads GRSGSGKS. Position 56–59 (56–59) interacts with GTP; it reads DVRN. Residues 266–284 are RNA-binding; the sequence is RSRGKNVQSRHRTLEKRKS.

The protein belongs to the RapZ-like family. RapZ subfamily. As to quaternary structure, homotrimer.

Modulates the synthesis of GlmS, by affecting the processing and stability of the regulatory small RNA GlmZ. When glucosamine-6-phosphate (GlcN6P) concentrations are high in the cell, RapZ binds GlmZ and targets it to cleavage by RNase E. Consequently, GlmZ is inactivated and unable to activate GlmS synthesis. Under low GlcN6P concentrations, RapZ is sequestered and inactivated by an other regulatory small RNA, GlmY, preventing GlmZ degradation and leading to synthesis of GlmS. This is RNase adapter protein RapZ from Cronobacter sakazakii (strain ATCC BAA-894) (Enterobacter sakazakii).